We begin with the raw amino-acid sequence, 102 residues long: Urease subunit beta (102 aa).

Belongs to the urease beta subunit family. In terms of assembly, heterotrimer of UreA (gamma), UreB (beta) and UreC (alpha) subunits. Three heterotrimers associate to form the active enzyme.

The protein resides in the cytoplasm. It carries out the reaction urea + 2 H2O + H(+) = hydrogencarbonate + 2 NH4(+). It functions in the pathway nitrogen metabolism; urea degradation; CO(2) and NH(3) from urea (urease route): step 1/1. This is Urease subunit beta from Pseudomonas syringae pv. tomato (strain ATCC BAA-871 / DC3000).